The following is a 300-amino-acid chain: Acetylglutamate kinase (300 aa).

Residues 73–74, Arg95, and Asn197 each bind substrate; that span reads GG.

Belongs to the acetylglutamate kinase family. ArgB subfamily.

Its subcellular location is the cytoplasm. It carries out the reaction N-acetyl-L-glutamate + ATP = N-acetyl-L-glutamyl 5-phosphate + ADP. Its pathway is amino-acid biosynthesis; L-arginine biosynthesis; N(2)-acetyl-L-ornithine from L-glutamate: step 2/4. Functionally, catalyzes the ATP-dependent phosphorylation of N-acetyl-L-glutamate. The chain is Acetylglutamate kinase from Bordetella avium (strain 197N).